The sequence spans 420 residues: Nucleobindin-2 (420 aa).

The signal sequence occupies residues 1-24 (MRWRIIQVQYCFLLVPCMLTALEA). The DNA-binding element occupies 171–223 (RTRHEEFKKYEMMKEHERREYLKTLSEEKRKEEESKFEEMKRKHEDHPKVNHP). A disordered region spans residues 193–225 (KTLSEEKRKEEESKFEEMKRKHEDHPKVNHPGS). A binds to necdin region spans residues 213–420 (KHEDHPKVNH…AGELKFEPHT (208 aa)). EF-hand domains are found at residues 241 to 276 (PNDFDPKTFFKLHDVNNDGFLDEQELEALFTRELEK) and 293 to 328 (ERLRMREHVMSEIDNNKDRLVTLEEFLRATEKKEFL). 8 residues coordinate Ca(2+): D254, N256, D258, E265, D306, N308, D310, and E317. The GBA signature appears at 304–334 (EIDNNKDRLVTLEEFLRATEKKEFLEPDSWE). The residue at position 332 (S332) is a Phosphoserine. Residues 365 to 389 (AEELQKQKEDLQRQHDHLEAQKQEY) show a composition bias toward basic and acidic residues. The interval 365–420 (AEELQKQKEDLQRQHDHLEAQKQEYHQAVQHLEQKKLQQGIAPSGPAGELKFEPHT) is disordered.

This sequence belongs to the nucleobindin family. In terms of assembly, interacts (via GBA motif) with guanine nucleotide-binding protein G(i) alpha subunit GNAI3. Preferentially interacts with inactive rather than active GNAI3. Interaction with GNAI3 is inhibited when NUCB2 binds calcium, probably due to a conformational change which renders the GBA motif inaccessible. Binds to the postmitotic growth suppressor NDN; coexpression abolishes NUCB2 secretion. Interacts with MC4R. In terms of tissue distribution, found in liver, heart, thymus, muscle, intestine, kidney, lung, spleen and throughout the brain, in cerebral cortex, hippocampus, hypothalamus and medulla oblongata. Nucb2 and necdin levels were higher in postmitotic neurons.

The protein resides in the cytoplasm. Its subcellular location is the perikaryon. The protein localises to the endoplasmic reticulum. It is found in the golgi apparatus. It localises to the nucleus envelope. The protein resides in the membrane. Its subcellular location is the secreted. In terms of biological role, calcium-binding protein which may have a role in calcium homeostasis. Acts as a non-receptor guanine nucleotide exchange factor which binds to and activates guanine nucleotide-binding protein (G-protein) alpha subunit GNAI3. Functionally, anorexigenic peptide, seems to play an important role in hypothalamic pathways regulating food intake and energy homeostasis, acting in a leptin-independent manner. May also exert hypertensive roles and modulate blood pressure through directly acting on peripheral arterial resistance. In intestinal epithelial cells, plays a role in the inhibition of hepatic glucose production via MC4R receptor leading to increased cyclic adenosine monophosphate (cAMP) levels and glucagon-like peptide 1 (GLP-1) secretion. In Mus musculus (Mouse), this protein is Nucleobindin-2 (Nucb2).